Consider the following 1036-residue polypeptide: Histidine kinase 3 (1036 aa).

Residues 1 to 8 (MSLFHVLG) are Extracellular-facing. Residues 9-29 (FGVKIGHLFWMLCCWFVSWFV) traverse the membrane as a helical segment. Topologically, residues 30-94 (DNGIEDKSGL…VKFNKAWWRK (65 aa)) are cytoplasmic. The helical transmembrane segment at 95–115 (LVVVWVVFWVLVSIWTFWYFS) threads the bilayer. Topologically, residues 116 to 399 (SQAMEKRKET…CRFKQKPPWP (284 aa)) are extracellular. Residues 163–389 (IPSAIDQRTF…GDPLRKHEMR (227 aa)) enclose the CHASE domain. Residues 400 to 420 (VLSMVTSFGILVIALLVAHII) traverse the membrane as a helical segment. Residues 421 to 1036 (HATVSRIHKV…FFNSPSDTES (616 aa)) are Cytoplasmic-facing. In terms of domain architecture, Histidine kinase spans 457–723 (TVSHEIRTPM…TFTFTAVFSN (267 aa)). Phosphohistidine; by autocatalysis is present on His460. Response regulatory domains follow at residues 746–865 (KAVV…QRGL) and 891–1028 (KILI…SRFF). Asp941 carries the 4-aspartylphosphate modification.

As to quaternary structure, interacts with AHK2, AHK4, AHP1, AHP2, AHP3, AHP5 and At5g43560. Post-translationally, autophosphorylated predominantly on His residues. Activation probably requires a transfer of a phosphate group between a His in the transmitter domain and an Asp of the receiver domain. As to expression, mostly expressed in leaves and flowers, and, to a lower extent, in roots, stems, and siliques, especially in the vascular tissues. Present in seedlings.

Its subcellular location is the cell membrane. It localises to the endoplasmic reticulum membrane. It carries out the reaction ATP + protein L-histidine = ADP + protein N-phospho-L-histidine.. Its activity is regulated as follows. Activated by cytokinins to initiate phosphorelay signaling. This cytokinin-mediated activation is repressed by the trans-zeatin antagonists 6-(2-hydroxy-3-methylbenzylamino)purine (PI-55) and 6-(2,5-Dihydroxybenzylamino)purine (LGR-991). Functionally, cytokinins (CK) receptor related to bacterial two-component regulators. Functions as a histidine kinase and transmits the stress signal to a downstream MAPK cascade. This protein undergoes an ATP-dependent autophosphorylation at a conserved histidine residue in the kinase core, and a phosphoryl group is then transferred to a conserved aspartate residue in the receiver domain. In the presence of cytokinin, feeds phosphate to phosphorelay-integrating histidine phosphotransfer protein (HPt) and activates subsequent cascade. Involved in meristems establishment in seedlings. Redundant negative regulator of drought and salt stress responses and abscisic acid (ABA) signaling. Together with AHK2, plays a negative regulatory role in cold stress signaling via inhibition of ABA response, occurring independently of the cold acclimation pathway. Redundant positive regulator of cytokinin signaling that regulates many developmental processes including seed germination, cell division, seed size, chlorophyll retention during leaf senescence, root repression and shoot promotion. Can interact with isoprenoid-type cytokinins trans-zeatin (tZ and tZR), cis-zeatin (cZ), dihydrozeatin (DZ), buta-2,3-dienyladenine (HA-8), penta-2,3-dienyladenine (HA-1), 4-methyl-penta-2,3-dienyladenine (HA-10), 4-hydroxy-2-butynyladenine (RM1), 2-propynyladenine (RM3), 2-butynyladenine (RM6), and cytokinin ribosides and ribotides. Together with AHK4, involved in the cytokinin-dependent responses to Pi starvation and sucrose stresses. Promotes cytokinin-mediated leaf longevity through a specific phosphorylation of the response regulator ARR2. Involved in alkamides (e.g. N-isobutyl decanamide) and N-acylethanolamides (NAE) signaling that control meristematic activity and differentiation processes during plant development. Contributes to vascular bundle formation and secondary growth in a cytokinin-dependent manner, probably by promoting the maintenance of mitotic activity and/or identity of procambial cells. Plays a role in the cytokinin-mediated repression of the iron uptake pathway. Required by the cytokinin-dependent flower development regulation pathway. This Arabidopsis thaliana (Mouse-ear cress) protein is Histidine kinase 3 (AHK3).